The primary structure comprises 136 residues: Protein PsiE (136 aa).

The next 4 membrane-spanning stretches (helical) occupy residues 15–35 (ILQT…VVFL), 55–75 (YELV…ALIV), 82–102 (FHFP…RLII), and 108–128 (PLDV…LWLC).

Belongs to the PsiE family.

It localises to the cell inner membrane. In Escherichia coli (strain SE11), this protein is Protein PsiE.